Reading from the N-terminus, the 344-residue chain is Hydrophobic dipeptide epimerase (344 aa).

Residues T126 and 151–153 (KIK) each bind substrate. 3 residues coordinate Mg(2+): D184, E210, and D235. Substrate contacts are provided by residues K257 and 307-309 (DLD).

Belongs to the mandelate racemase/muconate lactonizing enzyme family. It depends on Mg(2+) as a cofactor.

Dipeptide epimerase with a preference for hydrophobic substrates. Catalyzes the epimerization of L-Ala-L-Thr, L-Ala-L-Met, L-Ala-L-His, L-Ala-L-Phe, L-Ala-L-Tyr, L-Ala-L-Trp, L-Ile-L-Ala, L-Ile-L-Ser, L-Ile-L-Met, L-Ile-L-His, L-Ile-L-Phe, L-Ile-L-Tyr, L-Ile-L-Trp, L-Phe-L-Met, L-Phe-L-His, L-Phe-L-Phe, L-Phe-L-Tyr, L-Phe-L-Trp, L-Phe-L-Ser, L-Phe-L-Thr and L-Phe-L-Lys (in vitro). The chain is Hydrophobic dipeptide epimerase from Roseobacter litoralis (strain ATCC 49566 / DSM 6996 / JCM 21268 / NBRC 15278 / OCh 149).